Consider the following 470-residue polypeptide: Glucose-1-phosphate adenylyltransferase (470 aa).

Alpha-D-glucose 1-phosphate is bound by residues glycine 164, 181–182 (EK), and serine 199.

The protein belongs to the bacterial/plant glucose-1-phosphate adenylyltransferase family. In terms of assembly, homotetramer.

The enzyme catalyses alpha-D-glucose 1-phosphate + ATP + H(+) = ADP-alpha-D-glucose + diphosphate. It functions in the pathway glycan biosynthesis; glycogen biosynthesis. Involved in the biosynthesis of ADP-glucose, a building block required for the elongation reactions to produce glycogen. Catalyzes the reaction between ATP and alpha-D-glucose 1-phosphate (G1P) to produce pyrophosphate and ADP-Glc. The chain is Glucose-1-phosphate adenylyltransferase from Pseudarthrobacter chlorophenolicus (strain ATCC 700700 / DSM 12829 / CIP 107037 / JCM 12360 / KCTC 9906 / NCIMB 13794 / A6) (Arthrobacter chlorophenolicus).